The primary structure comprises 204 residues: N-alpha-acetyltransferase 40 (204 aa).

Positions 39–202 (EIYHHLEKGL…YYILYTKSRK (164 aa)) constitute an N-acetyltransferase domain. Residues tyrosine 64, 107–109 (TVE), and tyrosine 118 contribute to the substrate site. Acetyl-CoA is bound by residues 120-122 (IQL) and 128-133 (GRNVGK). Threonine 154 is a substrate binding site. Acetyl-CoA is bound at residue asparagine 159. Residue serine 176 coordinates substrate.

This sequence belongs to the acetyltransferase family. NAA40 subfamily.

The protein localises to the cytoplasm. Its subcellular location is the nucleus. It catalyses the reaction N-terminal L-seryl-[histone H4] + acetyl-CoA = N-terminal N(alpha)-acetyl-L-seryl-[histone H4] + CoA + H(+). It carries out the reaction N-terminal L-seryl-[histone H2A] + acetyl-CoA = N-terminal N(alpha)-acetyl-L-seryl-[histone H2A] + CoA + H(+). In terms of biological role, N-alpha-acetyltransferase that specifically mediates the acetylation of the N-terminal residues of histones H4 and H2A. This is N-alpha-acetyltransferase 40 from Schizosaccharomyces pombe (strain 972 / ATCC 24843) (Fission yeast).